The chain runs to 465 residues: Trigger factor (465 aa).

Positions 164–245 (GDFVSIDLSA…VQSVKERELP (82 aa)) constitute a PPIase FKBP-type domain. The disordered stretch occupies residues 430–465 (GNTVDTAEMFGEPAAEPEQADAAQAGDAEKAAADSE). Positions 440 to 455 (GEPAAEPEQADAAQAG) are enriched in low complexity. The span at 456–465 (DAEKAAADSE) shows a compositional bias: basic and acidic residues.

The protein belongs to the FKBP-type PPIase family. Tig subfamily.

It is found in the cytoplasm. The enzyme catalyses [protein]-peptidylproline (omega=180) = [protein]-peptidylproline (omega=0). Involved in protein export. Acts as a chaperone by maintaining the newly synthesized protein in an open conformation. Functions as a peptidyl-prolyl cis-trans isomerase. The chain is Trigger factor from Nocardia farcinica (strain IFM 10152).